The following is a 157-amino-acid chain: Transcription elongation factor GreA (157 aa).

It belongs to the GreA/GreB family.

Necessary for efficient RNA polymerase transcription elongation past template-encoded arresting sites. The arresting sites in DNA have the property of trapping a certain fraction of elongating RNA polymerases that pass through, resulting in locked ternary complexes. Cleavage of the nascent transcript by cleavage factors such as GreA or GreB allows the resumption of elongation from the new 3'terminus. GreA releases sequences of 2 to 3 nucleotides. The polypeptide is Transcription elongation factor GreA (Phenylobacterium zucineum (strain HLK1)).